The following is a 277-amino-acid chain: Shikimate dehydrogenase (NADP(+)) (277 aa).

Shikimate contacts are provided by residues 15–17 (SLS) and Thr-62. The Proton acceptor role is filled by Lys-66. Shikimate-binding residues include Asn-87 and Asp-102. NADP(+) is bound by residues 127-131 (GAGGA), 151-156 (NRTVDK), and Ile-219. Residue Tyr-221 participates in shikimate binding. Gly-242 serves as a coordination point for NADP(+).

This sequence belongs to the shikimate dehydrogenase family. Homodimer.

It carries out the reaction shikimate + NADP(+) = 3-dehydroshikimate + NADPH + H(+). It functions in the pathway metabolic intermediate biosynthesis; chorismate biosynthesis; chorismate from D-erythrose 4-phosphate and phosphoenolpyruvate: step 4/7. Involved in the biosynthesis of the chorismate, which leads to the biosynthesis of aromatic amino acids. Catalyzes the reversible NADPH linked reduction of 3-dehydroshikimate (DHSA) to yield shikimate (SA). The protein is Shikimate dehydrogenase (NADP(+)) of Bacillus cereus (strain 03BB102).